The chain runs to 333 residues: tRNA(Ile)-lysidine synthase (333 aa).

33-38 (SGGADS) contributes to the ATP binding site.

The protein belongs to the tRNA(Ile)-lysidine synthase family.

The protein localises to the cytoplasm. It carries out the reaction cytidine(34) in tRNA(Ile2) + L-lysine + ATP = lysidine(34) in tRNA(Ile2) + AMP + diphosphate + H(+). Functionally, ligates lysine onto the cytidine present at position 34 of the AUA codon-specific tRNA(Ile) that contains the anticodon CAU, in an ATP-dependent manner. Cytidine is converted to lysidine, thus changing the amino acid specificity of the tRNA from methionine to isoleucine. In Salinispora arenicola (strain CNS-205), this protein is tRNA(Ile)-lysidine synthase.